The sequence spans 160 residues: MPSFDVVSEVDTHELTNAIDQANRELATRFDFKGVDAKFEREGDVINQTAPTEFQLKQMNDILRARLAARGIDVLSLEFGDIETNLAQARQKITVKQGIEQKIAKKIAAALKDAKLKVESQINGDKLRVQGKKRDDLQDAIAVLKAGKFELPLQFNNFRD.

The protein belongs to the YajQ family.

Its function is as follows. Nucleotide-binding protein. This is Nucleotide-binding protein Smal_3487 from Stenotrophomonas maltophilia (strain R551-3).